A 710-amino-acid polypeptide reads, in one-letter code: Solute carrier family 15 member 1 (710 aa).

A helical transmembrane segment spans residues 1–21 (MGMSKSRGCFGYPLSIFFIVV). Residues 22–53 (NEFCERFSYYGMRALLVLYFRNFLGWDDDLST) are Extracellular-facing. A helical transmembrane segment spans residues 54 to 74 (AIYHTFVALCYLTPILGALIA). Residues 75–82 (DSWLGKFK) are Cytoplasmic-facing. The helical transmembrane segment at 83-103 (TIVSLSIVYTIGQAVISVSSI) threads the bilayer. Over 104–118 (NDLTDHDHDGSPNNL) the chain is Extracellular. The chain crosses the membrane as a helical span at residues 119–139 (PLHVALSMIGLALIALGTGGI). The Cytoplasmic segment spans residues 140-161 (KPCVSAFGGDQFEEGQEKQRNR). Residues 162–182 (FFSIFYLAINAGSLLSTIITP) form a helical membrane-spanning segment. At 183–198 (ILRVQQCGIHSQQACY) the chain is on the extracellular side. A helical membrane pass occupies residues 199 to 219 (PLAFGVPAALMAVALIVFVLG). Residues 220-276 (SGMYKKFQPQGNIMGKVAKCIRFAIKNRFRHRSKAFPKRNHWLDWAKEKYDERLISQ) lie on the Cytoplasmic side of the membrane. The helical transmembrane segment at 277 to 297 (IKIMTKVMFLYIPLPMFWALF) threads the bilayer. Topologically, residues 298–327 (DQQGSRWTLQATTMTGKIGTIEIQPDQMQT) are extracellular. The chain crosses the membrane as a helical span at residues 328-348 (VNAILIVIMVPIVDAVVYPLI). Residues 349–361 (AKCGFNFTSLKKM) lie on the Cytoplasmic side of the membrane. The chain crosses the membrane as a helical span at residues 362 to 382 (TVGMFLASMAFVVAAIVQVEI). The Extracellular portion of the chain corresponds to 383–586 (DKTLPVFPSG…PPNTVNMALQ (204 aa)). Residues 383 to 586 (DKTLPVFPSG…PPNTVNMALQ (204 aa)) form an extracellular domain (ECD) region. Residues N415, N439, N510, N532, and N539 are each glycosylated (N-linked (GlcNAc...) asparagine). A helical membrane pass occupies residues 587-607 (IPQYFLLTCGEVVFSVTGLEF). Residues 608-621 (SYSQAPSNMKSVLQ) are Cytoplasmic-facing. Residues 622–642 (AGWLLTVAIGNIIVLIVAEAG) traverse the membrane as a helical segment. The Extracellular segment spans residues 643–647 (HFDKQ). The helical transmembrane segment at 648–668 (WAEYVLFASLLLVVCIIFAIM) threads the bilayer. Residues 669-710 (ARFYTYINPAEIEAQFDEDEKKKGVGKENPYSSLEPVSQTNM) lie on the Cytoplasmic side of the membrane. Positions 687–710 (DEKKKGVGKENPYSSLEPVSQTNM) are disordered. Positions 698–710 (PYSSLEPVSQTNM) are enriched in polar residues.

It belongs to the major facilitator superfamily. Proton-dependent oligopeptide transporter (POT/PTR) (TC 2.A.17) family. In terms of assembly, interacts (via extracellular domain region) with trypsin. As to expression, highly expressed in small intestine. In terms of tissue distribution, expression is restricted to pinealocytes.

Its subcellular location is the apical cell membrane. The catalysed reaction is a dipeptide(out) + H(+)(out) = a dipeptide(in) + H(+)(in). The enzyme catalyses an L-amino acid tripeptide(out) + H(+)(out) = an L-amino acid tripeptide(in) + H(+)(in). It carries out the reaction L-alanyl-L-lysine(out) + H(+)(out) = L-alanyl-L-lysine(in) + H(+)(in). It catalyses the reaction L-alanyl-L-proline(out) + H(+)(out) = L-alanyl-L-proline(in) + H(+)(in). The catalysed reaction is L-alanyl-L-valine(out) + H(+)(out) = L-alanyl-L-valine(in) + H(+)(in). The enzyme catalyses carnosine(out) + H(+)(out) = carnosine(in) + H(+)(in). It carries out the reaction glycyl-L-glutamine(out) + H(+)(out) = glycyl-L-glutamine(in) + H(+)(in). It catalyses the reaction glycyl-L-leucine(out) + H(+)(out) = glycyl-L-leucine(in) + H(+)(in). The catalysed reaction is glycyl-L-proline(out) + H(+)(out) = glycyl-L-proline(in) + H(+)(in). The enzyme catalyses glycyl-sarcosine(out) + H(+)(out) = glycyl-sarcosine(in) + H(+)(in). It carries out the reaction L-leucyl-L-leucine(out) + H(+)(out) = L-leucyl-L-leucine(in) + H(+)(in). It catalyses the reaction L-leucyl-L-proline(out) + H(+)(out) = L-leucyl-L-proline(in) + H(+)(in). The catalysed reaction is L-phenylalanyl-L-leucine(out) + H(+)(out) = L-phenylalanyl-L-leucine(in) + H(+)(in). The enzyme catalyses L-phenylalanyl-L-phenylalanine(out) + H(+)(out) = L-phenylalanyl-L-phenylalanine(in) + H(+)(in). It carries out the reaction L-lysyl-glycine(out) + H(+)(out) = L-lysyl-glycine(in) + H(+)(in). It catalyses the reaction L-tyrosylglycine(out) + H(+)(out) = L-tyrosylglycine(in) + H(+)(in). The catalysed reaction is L-alanyl-L-aspartate(out) + 2 H(+)(out) = L-alanyl-L-aspartate(in) + 2 H(+)(in). The enzyme catalyses L-aspartyl-glycine(out) + 2 H(+)(out) = L-aspartyl-glycine(in) + 2 H(+)(in). It carries out the reaction glycyl-L-aspartate(out) + 2 H(+)(out) = glycyl-L-aspartate(in) + 2 H(+)(in). It catalyses the reaction glycyl-L-glutamate(out) + 2 H(+)(out) = glycyl-L-glutamate(in) + 2 H(+)(in). The catalysed reaction is L-alanyl-L-leucyl-L-alanine(out) + H(+)(out) = L-alanyl-L-leucyl-L-alanine(in) + H(+)(in). The enzyme catalyses L-alanyl-L-prolylglycine(out) + H(+)(out) = L-alanyl-L-prolylglycine(in) + H(+)(in). It carries out the reaction glycylglycyl-L-isoleucine(out) + H(+)(out) = glycylglycyl-L-isoleucine(in) + H(+)(in). It catalyses the reaction glycylglycyl-L-proline(out) + H(+)(out) = glycylglycyl-L-proline(in) + H(+)(in). The catalysed reaction is L-methionyl-L-phenylalanyl-L-methionine(out) + H(+)(out) = L-methionyl-L-phenylalanyl-L-methionine(in) + H(+)(in). The enzyme catalyses N-acetyl-D-muramoyl-L-alanyl-D-isoglutamine(out) + 2 H(+)(out) = N-acetyl-D-muramoyl-L-alanyl-D-isoglutamine(in) + 2 H(+)(in). It carries out the reaction N(alpha)-formyl-L-methionyl-L-leucyl-L-phenylalanine(out) + 2 H(+)(out) = N(alpha)-formyl-L-methionyl-L-leucyl-L-phenylalanine(in) + 2 H(+)(in). Functionally, electrogenic proton-coupled amino-acid transporter that transports oligopeptides of 2 to 4 amino acids with a preference for dipeptides. Transports neutral and monovalently charged peptides with a proton to peptide stoichiometry of 1:1 or 2:1. Primarily responsible for the absorption of dietary di- and tripeptides from the small intestinal lumen. Mediates transepithelial transport of muramyl and N-formylated bacterial dipeptides contributing to recognition of pathogenic bacteria by the mucosal immune system. This is Solute carrier family 15 member 1 (Slc15a1) from Rattus norvegicus (Rat).